Reading from the N-terminus, the 125-residue chain is Small ribosomal subunit protein uS12m (125 aa).

The disordered stretch occupies residues 1-51 (MPTKNQLIRHGREEKRRTDRTRALDQCPQKQGVCPRVSTRTPKKPNSAPRK). Residues 10–23 (HGREEKRRTDRTRA) show a composition bias toward basic and acidic residues.

It belongs to the universal ribosomal protein uS12 family.

Its subcellular location is the mitochondrion. Protein S12 is involved in the translation initiation step. The protein is Small ribosomal subunit protein uS12m (RPS12) of Nicotiana sylvestris (Wood tobacco).